The primary structure comprises 210 residues: Molybdenum cofactor guanylyltransferase (210 aa).

GTP-binding positions include 14-16 (LAG), K27, N55, D73, and D108. D108 lines the Mg(2+) pocket.

This sequence belongs to the MobA family. As to quaternary structure, monomer. Requires Mg(2+) as cofactor.

The protein resides in the cytoplasm. It carries out the reaction Mo-molybdopterin + GTP + H(+) = Mo-molybdopterin guanine dinucleotide + diphosphate. In terms of biological role, transfers a GMP moiety from GTP to Mo-molybdopterin (Mo-MPT) cofactor (Moco or molybdenum cofactor) to form Mo-molybdopterin guanine dinucleotide (Mo-MGD) cofactor. The polypeptide is Molybdenum cofactor guanylyltransferase (Rhodopseudomonas palustris (strain BisB5)).